A 98-amino-acid chain; its full sequence is Ribonuclease P protein component 4 (98 aa).

Cysteine 62, cysteine 65, cysteine 85, and cysteine 88 together coordinate Zn(2+).

It belongs to the eukaryotic/archaeal RNase P protein component 4 family. Consists of a catalytic RNA component and at least 4-5 protein subunits. Zn(2+) serves as cofactor.

It localises to the cytoplasm. It carries out the reaction Endonucleolytic cleavage of RNA, removing 5'-extranucleotides from tRNA precursor.. Its function is as follows. Part of ribonuclease P, a protein complex that generates mature tRNA molecules by cleaving their 5'-ends. In Thermoplasma volcanium (strain ATCC 51530 / DSM 4299 / JCM 9571 / NBRC 15438 / GSS1), this protein is Ribonuclease P protein component 4.